The following is a 368-amino-acid chain: Guanylate binding protein 128up (368 aa).

Lys-22 is subject to (3S)-3-hydroxylysine. The OBG-type G domain occupies 65-290; the sequence is ARVGFVGFPS…LLELMWEYLR (226 aa). Residues 71 to 78, 117 to 121, and 248 to 251 each bind GTP; these read GFPSVGKS, DLPGI, and NKID. The region spanning 290-366 is the TGS domain; that stretch reads RLQRIYTKPK…NDEDVVQIVK (77 aa).

It belongs to the TRAFAC class OBG-HflX-like GTPase superfamily. OBG GTPase family. In terms of processing, hydroxylated (with S stereochemistry) at C-3 of Lys-22 by JMJD7. In terms of tissue distribution, expressed in posterior-lateral epidermis of the maxillary lobe.

Its function is as follows. Catalyzes the conversion of GTP to GDP through hydrolysis of the gamma-phosphate bond in GTP. Dfd/deformed is required to activate 128up in maxillary segment cells. This chain is Guanylate binding protein 128up, found in Drosophila melanogaster (Fruit fly).